A 444-amino-acid chain; its full sequence is F-box/FBD/LRR-repeat protein At5g53840 (444 aa).

The region spanning 17–63 is the F-box domain; the sequence is EERLSQLPDHLICVILSHLSTKDAVRTSILSTRWRNLWQLVPVLDFD. 11 LRR repeats span residues 103–123, 124–150, 151–171, 172–197, 199–224, 226–252, 273–299, 300–321, 322–347, 369–396, and 398–423; these read YYLT…IDIS, VFTC…KLSR, VTMV…DLDF, VNFT…TIVK, SEDN…RFDR, NGLV…EFIN, NRSM…TIKD, IFHY…LSAV, CSIS…SLKL, VSSL…YFLE, and STIL…HIRQ. The region spanning 356-408 is the FBD domain; the sequence is EEVMSSTVPPPCLVSSLKFVKLESQLLGCGTELKVARYFLENSTILEKLTLKI.

This is F-box/FBD/LRR-repeat protein At5g53840 from Arabidopsis thaliana (Mouse-ear cress).